A 333-amino-acid polypeptide reads, in one-letter code: Glycerol-3-phosphate dehydrogenase [NAD(P)+] (333 aa).

NADPH is bound by residues tryptophan 11, arginine 30, and lysine 105. Residues lysine 105, glycine 133, and serine 135 each coordinate sn-glycerol 3-phosphate. Alanine 137 serves as a coordination point for NADPH. Sn-glycerol 3-phosphate is bound by residues lysine 188, aspartate 241, serine 251, arginine 252, and asparagine 253. Lysine 188 serves as the catalytic Proton acceptor. Residue arginine 252 participates in NADPH binding. The NADPH site is built by valine 276 and glutamate 278.

Belongs to the NAD-dependent glycerol-3-phosphate dehydrogenase family.

The protein resides in the cytoplasm. The enzyme catalyses sn-glycerol 3-phosphate + NAD(+) = dihydroxyacetone phosphate + NADH + H(+). It carries out the reaction sn-glycerol 3-phosphate + NADP(+) = dihydroxyacetone phosphate + NADPH + H(+). It functions in the pathway membrane lipid metabolism; glycerophospholipid metabolism. Functionally, catalyzes the reduction of the glycolytic intermediate dihydroxyacetone phosphate (DHAP) to sn-glycerol 3-phosphate (G3P), the key precursor for phospholipid synthesis. The protein is Glycerol-3-phosphate dehydrogenase [NAD(P)+] of Methylibium petroleiphilum (strain ATCC BAA-1232 / LMG 22953 / PM1).